Consider the following 434-residue polypeptide: Nicotinate phosphoribosyltransferase (434 aa).

His-242 carries the post-translational modification Phosphohistidine; by autocatalysis.

The protein belongs to the NAPRTase family. In terms of processing, transiently phosphorylated on a His residue during the reaction cycle. Phosphorylation strongly increases the affinity for substrates and increases the rate of nicotinate D-ribonucleotide production. Dephosphorylation regenerates the low-affinity form of the enzyme, leading to product release.

It catalyses the reaction nicotinate + 5-phospho-alpha-D-ribose 1-diphosphate + ATP + H2O = nicotinate beta-D-ribonucleotide + ADP + phosphate + diphosphate. It participates in cofactor biosynthesis; NAD(+) biosynthesis; nicotinate D-ribonucleotide from nicotinate: step 1/1. Its function is as follows. Catalyzes the synthesis of beta-nicotinate D-ribonucleotide from nicotinate and 5-phospho-D-ribose 1-phosphate at the expense of ATP. The chain is Nicotinate phosphoribosyltransferase from Chelativorans sp. (strain BNC1).